Reading from the N-terminus, the 216-residue chain is Somatotropin (216 aa).

The signal sequence occupies residues Met1–Ala26. His45 lines the Zn(2+) pocket. Cysteines 78 and 189 form a disulfide. At Ser131 the chain carries Phosphoserine. A Zn(2+)-binding site is contributed by Glu198. An intrachain disulfide couples Cys206 to Cys214.

It belongs to the somatotropin/prolactin family.

The protein localises to the secreted. Its function is as follows. Plays an important role in growth control. Its major role in stimulating body growth is to stimulate the liver and other tissues to secrete IGF1. It stimulates both the differentiation and proliferation of myoblasts. It also stimulates amino acid uptake and protein synthesis in muscle and other tissues. The chain is Somatotropin (GH1) from Camelus dromedarius (Dromedary).